Here is a 453-residue protein sequence, read N- to C-terminus: Transmembrane protease serine 3 (453 aa).

The Cytoplasmic segment spans residues 1–48 (MGENDPPAAEAPFSFRSLFGLDDLKISPVAPDGDAVAAQILSLLPLKF). Residues 49–69 (FPIIVIGIIALILALAIGLGI) form a helical; Signal-anchor for type II membrane protein membrane-spanning segment. Residues 70–453 (HFDCSGKYRC…HEQLERDLKT (384 aa)) lie on the Extracellular side of the membrane. One can recognise an LDL-receptor class A domain in the interval 72-108 (DCSGKYRCHSSFKCIELTARCDGVSDCKNAEDEYRCV). 10 cysteine pairs are disulfide-bonded: C73–C85, C79–C98, C92–C107, C129–C194, C142–C204, C207–C324, C242–C258, C338–C406, C369–C385, and C396–C424. One can recognise an SRCR domain in the interval 104–205 (EYRCVRVSGQ…SGHVVTLKCS (102 aa)). In terms of domain architecture, Peptidase S1 spans 217-448 (IVGGNMSSLT…FLDWIHEQLE (232 aa)). N221 carries N-linked (GlcNAc...) asparagine glycosylation. Catalysis depends on charge relay system residues H257 and D304. The Charge relay system role is filled by S400.

This sequence belongs to the peptidase S1 family. Undergoes autoproteolytic activation. Strongly expressed in liver, cochlea, brain, cerebellum, spleen, lung, and muscle and at a lower degree in retina, kidney, and heart. Expressed in the spiral ganglion, the cells supporting the organ of Corti and the stria vascularis. Isoform 2 is strongly expressed only in the cochlea with very faint expression in the cerebellum, spleen and muscle.

It localises to the endoplasmic reticulum membrane. In terms of biological role, probable serine protease that plays a role in hearing. Acts as a permissive factor for cochlear hair cell survival and activation at the onset of hearing and is required for saccular hair cell survival. Activates ENaC (in vitro). The chain is Transmembrane protease serine 3 (Tmprss3) from Mus musculus (Mouse).